Consider the following 298-residue polypeptide: tRNA dimethylallyltransferase (298 aa).

Position 10 to 17 (10 to 17 (GATATGKS)) interacts with ATP. 12-17 (TATGKS) contributes to the substrate binding site. Positions 35-38 (DSRQ) are interaction with substrate tRNA.

The protein belongs to the IPP transferase family. Monomer. It depends on Mg(2+) as a cofactor.

The catalysed reaction is adenosine(37) in tRNA + dimethylallyl diphosphate = N(6)-dimethylallyladenosine(37) in tRNA + diphosphate. In terms of biological role, catalyzes the transfer of a dimethylallyl group onto the adenine at position 37 in tRNAs that read codons beginning with uridine, leading to the formation of N6-(dimethylallyl)adenosine (i(6)A). The chain is tRNA dimethylallyltransferase from Picosynechococcus sp. (strain ATCC 27264 / PCC 7002 / PR-6) (Agmenellum quadruplicatum).